A 205-amino-acid polypeptide reads, in one-letter code: MGGTFDPIHHGHLVAASEVQAWFDLDEVLFVPTGDPWQKSDRDVSPAEHRYLMTVIATAANPRFTVSRVDIDRSGPTYTIDTLRDLRAQLPDAELYFITGVDALAEIFTWRDAEELFTLARFVGCTRPGYLMDDAALATIPTDRVTIVEIPALAISSTDCRRRSQRGEPVWYLVPDGVVQYLAKYDLYPRVIPPDTTKDTSEDMQ.

Belongs to the NadD family.

The catalysed reaction is nicotinate beta-D-ribonucleotide + ATP + H(+) = deamido-NAD(+) + diphosphate. The protein operates within cofactor biosynthesis; NAD(+) biosynthesis; deamido-NAD(+) from nicotinate D-ribonucleotide: step 1/1. Catalyzes the reversible adenylation of nicotinate mononucleotide (NaMN) to nicotinic acid adenine dinucleotide (NaAD). The polypeptide is Probable nicotinate-nucleotide adenylyltransferase (Nocardioides sp. (strain ATCC BAA-499 / JS614)).